The chain runs to 360 residues: Peptide chain release factor 1 (360 aa).

Position 235 is an N5-methylglutamine (Gln235).

This sequence belongs to the prokaryotic/mitochondrial release factor family. Post-translationally, methylated by PrmC. Methylation increases the termination efficiency of RF1.

The protein resides in the cytoplasm. Its function is as follows. Peptide chain release factor 1 directs the termination of translation in response to the peptide chain termination codons UAG and UAA. The protein is Peptide chain release factor 1 of Cupriavidus pinatubonensis (strain JMP 134 / LMG 1197) (Cupriavidus necator (strain JMP 134)).